Here is a 384-residue protein sequence, read N- to C-terminus: Mannitol-1-phosphate 5-dehydrogenase (384 aa).

3 to 14 lines the NAD(+) pocket; sequence AVHFGAGNIGRG.

This sequence belongs to the mannitol dehydrogenase family.

It catalyses the reaction D-mannitol 1-phosphate + NAD(+) = beta-D-fructose 6-phosphate + NADH + H(+). The sequence is that of Mannitol-1-phosphate 5-dehydrogenase from Arthrobacter sp. (strain FB24).